Consider the following 63-residue polypeptide: uncharacterized protein (63 aa).

The signal sequence occupies residues 1–15; it reads MRNPVVWGMIYFAVG. Residue Cys16 is the site of N-palmitoyl cysteine attachment. Cys16 carries S-diacylglycerol cysteine lipidation. Residues 34–56 form a helical membrane-spanning segment; that stretch reads SILLMVFAAYNISISFKMFAFSF.

The protein resides in the cell membrane. This is an uncharacterized protein from Bacillus subtilis (strain 168).